The primary structure comprises 336 residues: Cycloartenol-C-24-methyltransferase (336 aa).

Residue Met-1 is modified to N-acetylmethionine.

It belongs to the class I-like SAM-binding methyltransferase superfamily. Erg6/SMT family. Highly expressed in vascular tissue, mature leaves and in regions undergoing cellular expansion.

The catalysed reaction is cycloartenol + S-adenosyl-L-methionine = 24-methylenecycloartanol + S-adenosyl-L-homocysteine + H(+). Its pathway is steroid biosynthesis; sterol biosynthesis. Functionally, catalyzes the methyl transfer from S-adenosyl-methionine to the C-24 of cycloartenol to form 24-methylene cycloartenol. This Arabidopsis thaliana (Mouse-ear cress) protein is Cycloartenol-C-24-methyltransferase (SMT1).